We begin with the raw amino-acid sequence, 387 residues long: 3-ketoacyl-CoA thiolase (387 aa).

The active-site Acyl-thioester intermediate is the Cys91. Catalysis depends on proton acceptor residues His343 and Cys373.

It belongs to the thiolase-like superfamily. Thiolase family. In terms of assembly, heterotetramer of two alpha chains (FadB) and two beta chains (FadA).

It localises to the cytoplasm. It catalyses the reaction an acyl-CoA + acetyl-CoA = a 3-oxoacyl-CoA + CoA. It participates in lipid metabolism; fatty acid beta-oxidation. Its function is as follows. Catalyzes the final step of fatty acid oxidation in which acetyl-CoA is released and the CoA ester of a fatty acid two carbons shorter is formed. The chain is 3-ketoacyl-CoA thiolase from Shigella dysenteriae serotype 1 (strain Sd197).